A 501-amino-acid polypeptide reads, in one-letter code: Glutamyl-tRNA(Gln) amidotransferase subunit A (501 aa).

Residues K80 and S155 each act as charge relay system in the active site. The active-site Acyl-ester intermediate is the S179.

This sequence belongs to the amidase family. GatA subfamily. As to quaternary structure, heterotrimer of A, B and C subunits.

The enzyme catalyses L-glutamyl-tRNA(Gln) + L-glutamine + ATP + H2O = L-glutaminyl-tRNA(Gln) + L-glutamate + ADP + phosphate + H(+). Allows the formation of correctly charged Gln-tRNA(Gln) through the transamidation of misacylated Glu-tRNA(Gln) in organisms which lack glutaminyl-tRNA synthetase. The reaction takes place in the presence of glutamine and ATP through an activated gamma-phospho-Glu-tRNA(Gln). The protein is Glutamyl-tRNA(Gln) amidotransferase subunit A of Cutibacterium acnes (strain DSM 16379 / KPA171202) (Propionibacterium acnes).